The primary structure comprises 188 residues: GMP synthase [glutamine-hydrolyzing] subunit A (188 aa).

Residues 2–188 enclose the Glutamine amidotransferase type-1 domain; that stretch reads KVGLVYYGGQ…FKNFLGVCRK (187 aa). Cys-79 acts as the Nucleophile in catalysis. Active-site residues include His-166 and Glu-168.

As to quaternary structure, heterodimer composed of a glutamine amidotransferase subunit (A) and a GMP-binding subunit (B).

It carries out the reaction XMP + L-glutamine + ATP + H2O = GMP + L-glutamate + AMP + diphosphate + 2 H(+). The protein operates within purine metabolism; GMP biosynthesis; GMP from XMP (L-Gln route): step 1/1. Its function is as follows. Catalyzes the synthesis of GMP from XMP. The protein is GMP synthase [glutamine-hydrolyzing] subunit A of Saccharolobus solfataricus (strain ATCC 35092 / DSM 1617 / JCM 11322 / P2) (Sulfolobus solfataricus).